Here is an 850-residue protein sequence, read N- to C-terminus: MYRQEATTVTILAQAPPNWPAPAFDISGFTSAFRPSRRAQRSNTTMGSIDTNSTDAWHTFAIPRLGIPAMRITDGPNGARGTRYFNGVPSACLPCGTALGATFDTDLLFKLGRLLAAECKAKGAHVLLGPTINIQRGPLGGRGFESFSEDPVLSGNSAASYCAGVKDLGIVPTLKHLVCNDQEHERIAVSAMVTERALREIYLMPFQLAIKNARPGALMTSYNKVNGLHASEDPGLLNHIIRKEWGFEGLIMSDWFGTYSVASAVNAGLDLEMPGPTRFRGPALMHALTSNKVSEKTLDDRVRKVLELVQLTSRAGIPEYAPAQKLDRVEDRVLLRQAAADSIVLLKNANEVLPLDPRKKTLVIGPNADIAAYCGGGSASLLAYYTVTPRQGIAEKCEEVVFSQGCYGHKELPLLGDHLKTETGERGYTFRVYTEPATYEDRQPVDVLHMTNSCAFLMDYSHPKISGDTYYATLEGRFEPTESGVYELGLTVAGTGLLYIDGELVIDNKTKQRHGTSFFGIGTVEERGERYLEAGRQHHVFVEYSTAPTSNLKHHGVVSFGPGGVRLGGCRKLDAETAIKQAVQLAAETEQVVVCVGMNGNWESEGFDRPHMDLPPGTDNLVRAVIEAQPNAVIVVQSGTPVTMPWADQAKALVQAWYGGSEGGNGIADVLFGDVNPSAKLPLTFPRDIAHNPSYLSYRSERGRVLYSEDVYVGYRYYDKVKQAPLFHFGHGLSYTTFKLSGLNVQETDPQASDISAEVVQIYVRPPTTASVGRPVRELKGYEKTMLHPGETKEISVTVPMGVATSFWDEGRSAWLSEKGTYAIEVVGTGERNMLSAPLCVQVSRYWNGL.

2 N-linked (GlcNAc...) asparagine glycosylation sites follow: Asn-43 and Asn-52. Asp-254 is a catalytic residue. Positions 423-583 (TGERGYTFRV…DAETAIKQAV (161 aa)) constitute a PA14 domain. Residue Asn-508 is glycosylated (N-linked (GlcNAc...) asparagine).

This sequence belongs to the glycosyl hydrolase 3 family.

Its subcellular location is the secreted. It carries out the reaction Hydrolysis of terminal, non-reducing beta-D-glucosyl residues with release of beta-D-glucose.. It functions in the pathway glycan metabolism; cellulose degradation. In terms of biological role, beta-glucosidases are one of a number of cellulolytic enzymes involved in the degradation of cellulosic biomass. Catalyzes the last step releasing glucose from the inhibitory cellobiose. The protein is Probable beta-glucosidase J (bglJ) of Emericella nidulans (strain FGSC A4 / ATCC 38163 / CBS 112.46 / NRRL 194 / M139) (Aspergillus nidulans).